The chain runs to 148 residues: Large ribosomal subunit protein bL9 (148 aa).

A disordered region spans residues 46–65 (QLQQQNKHAEQEREQEIEDA). The segment covering 52–65 (KHAEQEREQEIEDA) has biased composition (basic and acidic residues).

This sequence belongs to the bacterial ribosomal protein bL9 family.

Functionally, binds to the 23S rRNA. The polypeptide is Large ribosomal subunit protein bL9 (Staphylococcus carnosus (strain TM300)).